A 78-amino-acid polypeptide reads, in one-letter code: Large ribosomal subunit protein bL28 (78 aa).

It belongs to the bacterial ribosomal protein bL28 family.

The polypeptide is Large ribosomal subunit protein bL28 (Prochlorococcus marinus (strain MIT 9312)).